The chain runs to 33 residues: Beta-amanitin proprotein (33 aa).

The propeptide occupies 1 to 10 (MSDINATRLP). A cross-link (cyclopeptide (Ile-Pro)) is located at residues 11 to 18 (IWGIGCDP). The segment at residues 12 to 16 (WGIGC) is a cross-link (2'-cysteinyl-6'-hydroxytryptophan sulfoxide (Trp-Cys)). Positions 19 to 33 (CVGDDVAALTTRGEA) are excised as a propeptide.

This sequence belongs to the MSDIN fungal toxin family. In terms of processing, processed by the macrocyclase-peptidase enzyme POPB to yield a toxic cyclic decapeptide. POPB first removes 10 residues from the N-terminus. Conformational trapping of the remaining peptide forces the enzyme to release this intermediate rather than proceed to macrocyclization. The enzyme rebinds the remaining peptide in a different conformation and catalyzes macrocyclization of the N-terminal 8 residues.

Functionally, toxin belonging to the bicyclic octapeptides amatoxins that acts by binding non-competitively to RNA polymerase II and greatly slowing the elongation of transcripts from target promoters. The chain is Beta-amanitin proprotein from Amanita rimosa.